Consider the following 207-residue polypeptide: MTEPHANKQLEILRFIYDTVEERAFPPTVREICSAVDLSSTSTVHGHLARLEKKGYILKDATKPRAIEVTEKGREALGIKPKDIPIVGVVTAGQPILAVQDIDEYFPLPPDLENDAGELFMLRVHGESMINAGILNGDHVIVRKQSSANNGEIVVAMTEDNEATVKRFFKEDGYYRLQPENDTMDPIILPVVQILGKVVGLYRNNID.

Residues 29-49 (VREICSAVDLSSTSTVHGHLA) constitute a DNA-binding region (H-T-H motif). Residues serine 128 and lysine 166 each act as for autocatalytic cleavage activity in the active site.

It belongs to the peptidase S24 family. As to quaternary structure, homodimer.

It carries out the reaction Hydrolysis of Ala-|-Gly bond in repressor LexA.. Functionally, represses a number of genes involved in the response to DNA damage (SOS response), including recA and lexA. In the presence of single-stranded DNA, RecA interacts with LexA causing an autocatalytic cleavage which disrupts the DNA-binding part of LexA, leading to derepression of the SOS regulon and eventually DNA repair. This Lactobacillus gasseri (strain ATCC 33323 / DSM 20243 / BCRC 14619 / CIP 102991 / JCM 1131 / KCTC 3163 / NCIMB 11718 / NCTC 13722 / AM63) protein is LexA repressor.